The sequence spans 227 residues: uncharacterized protein (227 aa).

Positions 2-115 constitute a Response regulatory domain; it reads KILMIEDNVS…TLVARIKAVI (114 aa). D51 is modified (4-aspartylphosphate). A DNA-binding region (ompR/PhoB-type) is located at residues 128-226; sequence EDMIETECFT…VWGVGYKFDE (99 aa).

Phosphorylated by YclK.

It is found in the cytoplasm. Its function is as follows. Could be member of the two-component regulatory system YclK/YclJ. This is an uncharacterized protein from Bacillus subtilis (strain 168).